Here is a 125-residue protein sequence, read N- to C-terminus: Holo-[acyl-carrier-protein] synthase (125 aa).

Residues D6 and E55 each contribute to the Mg(2+) site.

This sequence belongs to the P-Pant transferase superfamily. AcpS family. Mg(2+) serves as cofactor.

The protein resides in the cytoplasm. The catalysed reaction is apo-[ACP] + CoA = holo-[ACP] + adenosine 3',5'-bisphosphate + H(+). Functionally, transfers the 4'-phosphopantetheine moiety from coenzyme A to a Ser of acyl-carrier-protein. In Chlorobium phaeovibrioides (strain DSM 265 / 1930) (Prosthecochloris vibrioformis (strain DSM 265)), this protein is Holo-[acyl-carrier-protein] synthase.